The sequence spans 145 residues: 3-hydroxyacyl-[acyl-carrier-protein] dehydratase FabZ (145 aa).

The active site involves His-49.

It belongs to the thioester dehydratase family. FabZ subfamily.

The protein localises to the cytoplasm. It carries out the reaction a (3R)-hydroxyacyl-[ACP] = a (2E)-enoyl-[ACP] + H2O. In terms of biological role, involved in unsaturated fatty acids biosynthesis. Catalyzes the dehydration of short chain beta-hydroxyacyl-ACPs and long chain saturated and unsaturated beta-hydroxyacyl-ACPs. This is 3-hydroxyacyl-[acyl-carrier-protein] dehydratase FabZ from Rickettsia massiliae (strain Mtu5).